The primary structure comprises 300 residues: Probable alpha-L-glutamate ligase (300 aa).

Residues Leu104–Glu287 enclose the ATP-grasp domain. Residues Lys141, Glu178–Tyr179, Asp187, and Arg211–Asn213 each bind ATP. 3 residues coordinate Mg(2+): Asp248, Glu260, and Asn262. The Mn(2+) site is built by Asp248, Glu260, and Asn262.

Belongs to the RimK family. Requires Mg(2+) as cofactor. Mn(2+) serves as cofactor.

The chain is Probable alpha-L-glutamate ligase from Klebsiella pneumoniae (strain 342).